The following is a 177-amino-acid chain: Large ribosomal subunit protein uL6 (177 aa).

This sequence belongs to the universal ribosomal protein uL6 family. In terms of assembly, part of the 50S ribosomal subunit.

Functionally, this protein binds to the 23S rRNA, and is important in its secondary structure. It is located near the subunit interface in the base of the L7/L12 stalk, and near the tRNA binding site of the peptidyltransferase center. The polypeptide is Large ribosomal subunit protein uL6 (Dinoroseobacter shibae (strain DSM 16493 / NCIMB 14021 / DFL 12)).